Reading from the N-terminus, the 644-residue chain is Exoribonuclease 2 (644 aa).

The region spanning 189 to 516 is the RNB domain; it reads REDLTALNFV…NHRLLKAIIA (328 aa). Residues 561–643 enclose the S1 motif domain; sequence DERFNAEIID…ETRSVIARPA (83 aa).

The protein belongs to the RNR ribonuclease family. RNase II subfamily.

The protein localises to the cytoplasm. The enzyme catalyses Exonucleolytic cleavage in the 3'- to 5'-direction to yield nucleoside 5'-phosphates.. Functionally, involved in mRNA degradation. Hydrolyzes single-stranded polyribonucleotides processively in the 3' to 5' direction. The sequence is that of Exoribonuclease 2 from Serratia proteamaculans (strain 568).